We begin with the raw amino-acid sequence, 339 residues long: UDP-N-acetylenolpyruvoylglucosamine reductase (339 aa).

The FAD-binding PCMH-type domain occupies 19–189; the sequence is VDVRAQLFAE…LRVRFALNRV (171 aa). The active site involves arginine 166. Residue serine 239 is the Proton donor of the active site. Glutamate 335 is a catalytic residue.

The protein belongs to the MurB family. FAD is required as a cofactor.

The protein resides in the cytoplasm. It carries out the reaction UDP-N-acetyl-alpha-D-muramate + NADP(+) = UDP-N-acetyl-3-O-(1-carboxyvinyl)-alpha-D-glucosamine + NADPH + H(+). Its pathway is cell wall biogenesis; peptidoglycan biosynthesis. Cell wall formation. This Pseudomonas fluorescens (strain Pf0-1) protein is UDP-N-acetylenolpyruvoylglucosamine reductase.